Here is a 548-residue protein sequence, read N- to C-terminus: MSGDTGPPKQGGTRYGSISSPPSPEPQQAPPGGTYLSEKIPIPDTESGTFSLRKLWAFTGPGFLMSIAFLDPGNIESDLQAGAVAGFKLLWVLLWATVLGLLCQRLAARLGVVTGKDLGEVCHLYYPKVPRILLWLTIELAIVGSDMQEVIGTAIAFSLLSAGRIPLWGGVLITVVDTFFFLFLDNYGLRKLEAFFGFLITIMALTFGYEYVVAQPAQGALLQGLFLPSCPGCGQPELLQAVGIIGAIIMPHNIYLHSSLVKSREVDRSRRADIREANMYFLIEATIALSVSFLINLFVMAVFGQAFYKQTNQAAFNICADSSLHDYAPIFPRNNLTVAVDIYQGGVILGCLFGPPALYIWAVGLLAAGQSSTMTGTYAGQFVMEGFLKLRWSRFARVLLTRSCAILPTVLLAVFRDLRDLSGLNDLLNVLQSLLLPFAVLPILTFTSMPALMQEFANGLVSKVITSSIMVLVCAVNLYFVISYLPSLPHPAYFSLVALLAAAYLGLTTYLVWTCLITQGATLLAHSSHQRFLYGLPEEDQEKGRTSG.

The disordered stretch occupies residues 1 to 38; that stretch reads MSGDTGPPKQGGTRYGSISSPPSPEPQQAPPGGTYLSE. The Cytoplasmic segment spans residues 1 to 55; sequence MSGDTGPPKQGGTRYGSISSPPSPEPQQAPPGGTYLSEKIPIPDTESGTFSLRKL. Residues 56–73 traverse the membrane as a helical segment; sequence WAFTGPGFLMSIAFLDPG. Residues 74-82 are Extracellular-facing; the sequence is NIESDLQAG. Residues 83–102 form a helical membrane-spanning segment; the sequence is AVAGFKLLWVLLWATVLGLL. At 103 to 139 the chain is on the cytoplasmic side; the sequence is CQRLAARLGVVTGKDLGEVCHLYYPKVPRILLWLTIE. A helical membrane pass occupies residues 140 to 160; the sequence is LAIVGSDMQEVIGTAIAFSLL. Topologically, residues 161-164 are extracellular; sequence SAGR. A helical membrane pass occupies residues 165-184; it reads IPLWGGVLITVVDTFFFLFL. Over 185 to 193 the chain is Cytoplasmic; it reads DNYGLRKLE. A helical membrane pass occupies residues 194-214; the sequence is AFFGFLITIMALTFGYEYVVA. At 215–237 the chain is on the extracellular side; sequence QPAQGALLQGLFLPSCPGCGQPE. The helical transmembrane segment at 238–256 threads the bilayer; that stretch reads LLQAVGIIGAIIMPHNIYL. Over 257–284 the chain is Cytoplasmic; the sequence is HSSLVKSREVDRSRRADIREANMYFLIE. The helical transmembrane segment at 285-304 threads the bilayer; that stretch reads ATIALSVSFLINLFVMAVFG. Topologically, residues 305 to 346 are extracellular; that stretch reads QAFYKQTNQAAFNICADSSLHDYAPIFPRNNLTVAVDIYQGG. N-linked (GlcNAc...) asparagine glycosylation is present at Asn-335. A helical membrane pass occupies residues 347 to 366; that stretch reads VILGCLFGPPALYIWAVGLL. Residues 367–397 are Cytoplasmic-facing; the sequence is AAGQSSTMTGTYAGQFVMEGFLKLRWSRFAR. A helical transmembrane segment spans residues 398–415; it reads VLLTRSCAILPTVLLAVF. Topologically, residues 416 to 426 are extracellular; that stretch reads RDLRDLSGLND. The helical transmembrane segment at 427–447 threads the bilayer; that stretch reads LLNVLQSLLLPFAVLPILTFT. At 448-463 the chain is on the cytoplasmic side; the sequence is SMPALMQEFANGLVSK. The chain crosses the membrane as a helical span at residues 464–485; it reads VITSSIMVLVCAVNLYFVISYL. Topologically, residues 486 to 493 are extracellular; it reads PSLPHPAY. The helical transmembrane segment at 494-513 threads the bilayer; sequence FSLVALLAAAYLGLTTYLVW. Residues 514 to 548 lie on the Cytoplasmic side of the membrane; that stretch reads TCLITQGATLLAHSSHQRFLYGLPEEDQEKGRTSG.

The protein belongs to the NRAMP family.

Its subcellular location is the late endosome membrane. The protein resides in the lysosome membrane. It catalyses the reaction Zn(2+)(in) + H(+)(out) = Zn(2+)(out) + H(+)(in). The enzyme catalyses Fe(2+)(in) + H(+)(out) = Fe(2+)(out) + H(+)(in). The catalysed reaction is Mn(2+)(in) + H(+)(out) = Mn(2+)(out) + H(+)(in). In terms of biological role, macrophage-specific antiporter that fluxes metal ions in either direction against a proton gradient. Localized to late endosomal lysosomal membranes, delivers bivalent cations from the cytosol into these acidic compartments where they may directly affect antimicrobial activity. Involved in iron metabolism and host natural resistance to infection with intracellular parasites. Pathogen resistance involves sequestration of Fe(2+) and Mn(2+), cofactors of both prokaryotic and eukaryotic catalases and superoxide dismutases, not only to protect the macrophage against its own generation of reactive oxygen species, but to deny the cations to the pathogen for synthesis of its protective enzymes. This is Natural resistance-associated macrophage protein 1 (SLC11A1) from Bos taurus (Bovine).